Reading from the N-terminus, the 100-residue chain is Small ribosomal subunit protein uS14c (100 aa).

This sequence belongs to the universal ribosomal protein uS14 family. As to quaternary structure, part of the 30S ribosomal subunit.

It localises to the plastid. The protein resides in the chloroplast. In terms of biological role, binds 16S rRNA, required for the assembly of 30S particles. The protein is Small ribosomal subunit protein uS14c of Aethionema grandiflorum (Persian stone-cress).